The chain runs to 229 residues: Ribonuclease 3 (229 aa).

The 130-residue stretch at 4–133 (WEELQESVGF…FIGALYLDNG (130 aa)) folds into the RNase III domain. E46 is a Mg(2+) binding site. D50 is a catalytic residue. 2 residues coordinate Mg(2+): D119 and E122. The active site involves E122. The DRBM domain occupies 159–228 (DYKTQLQEIV…AQFAINQLTH (70 aa)).

Belongs to the ribonuclease III family. As to quaternary structure, homodimer. The cofactor is Mg(2+).

Its subcellular location is the cytoplasm. The catalysed reaction is Endonucleolytic cleavage to 5'-phosphomonoester.. Its function is as follows. Digests double-stranded RNA. Involved in the processing of primary rRNA transcript to yield the immediate precursors to the large and small rRNAs (23S and 16S). Processes some mRNAs, and tRNAs when they are encoded in the rRNA operon. Processes pre-crRNA and tracrRNA of type II CRISPR loci if present in the organism. This is Ribonuclease 3 from Listeria monocytogenes serotype 4b (strain CLIP80459).